The sequence spans 356 residues: UDP-N-acetylglucosamine--N-acetylmuramyl-(pentapeptide) pyrophosphoryl-undecaprenol N-acetylglucosamine transferase (356 aa).

UDP-N-acetyl-alpha-D-glucosamine-binding positions include 12-14 (TGG), Asn124, Arg163, Ser188, Ile242, 261-266 (ALTVSE), and Gln287.

The protein belongs to the glycosyltransferase 28 family. MurG subfamily.

Its subcellular location is the cell inner membrane. The enzyme catalyses di-trans,octa-cis-undecaprenyl diphospho-N-acetyl-alpha-D-muramoyl-L-alanyl-D-glutamyl-meso-2,6-diaminopimeloyl-D-alanyl-D-alanine + UDP-N-acetyl-alpha-D-glucosamine = di-trans,octa-cis-undecaprenyl diphospho-[N-acetyl-alpha-D-glucosaminyl-(1-&gt;4)]-N-acetyl-alpha-D-muramoyl-L-alanyl-D-glutamyl-meso-2,6-diaminopimeloyl-D-alanyl-D-alanine + UDP + H(+). It participates in cell wall biogenesis; peptidoglycan biosynthesis. Cell wall formation. Catalyzes the transfer of a GlcNAc subunit on undecaprenyl-pyrophosphoryl-MurNAc-pentapeptide (lipid intermediate I) to form undecaprenyl-pyrophosphoryl-MurNAc-(pentapeptide)GlcNAc (lipid intermediate II). The chain is UDP-N-acetylglucosamine--N-acetylmuramyl-(pentapeptide) pyrophosphoryl-undecaprenol N-acetylglucosamine transferase from Pseudomonas fluorescens (strain SBW25).